We begin with the raw amino-acid sequence, 447 residues long: ATP-dependent protease ATPase subunit HslU (447 aa).

Residues Ile-18, 60-65 (GVGKTE), Asp-259, Glu-325, and Arg-397 each bind ATP.

This sequence belongs to the ClpX chaperone family. HslU subfamily. As to quaternary structure, a double ring-shaped homohexamer of HslV is capped on each side by a ring-shaped HslU homohexamer. The assembly of the HslU/HslV complex is dependent on binding of ATP.

The protein localises to the cytoplasm. Functionally, ATPase subunit of a proteasome-like degradation complex; this subunit has chaperone activity. The binding of ATP and its subsequent hydrolysis by HslU are essential for unfolding of protein substrates subsequently hydrolyzed by HslV. HslU recognizes the N-terminal part of its protein substrates and unfolds these before they are guided to HslV for hydrolysis. The protein is ATP-dependent protease ATPase subunit HslU of Burkholderia cenocepacia (strain ATCC BAA-245 / DSM 16553 / LMG 16656 / NCTC 13227 / J2315 / CF5610) (Burkholderia cepacia (strain J2315)).